The chain runs to 457 residues: UDP-glycosyltransferase 708C1 (457 aa).

Residue glycine 31 coordinates UDP-alpha-D-glucose. Histidine 32 functions as the Proton acceptor in the catalytic mechanism. Histidine 32 contributes to the an anthocyanidin binding site. A UDP-alpha-D-glucose-binding site is contributed by threonine 34. Asparagine 94 is a binding site for an anthocyanidin. Aspartate 129 acts as the Charge relay in catalysis. Threonine 150 serves as a coordination point for UDP-alpha-D-glucose. A UDP region spans residues 279-280 (NR). Residues valine 341, glutamine 343, histidine 358, tryptophan 361, asparagine 362, serine 363, and glutamate 366 each coordinate UDP-alpha-D-glucose. Glycine 381 lines the an anthocyanidin pocket. Residues aspartate 382 and glutamine 383 each contribute to the UDP-alpha-D-glucose site.

The protein belongs to the UDP-glycosyltransferase family. Expressed in cotyledons. Not detected in flowers, leaves, roots and hypocotyls.

The enzyme catalyses a 3'-hydro-2'-hydroxy-beta-oxodihydrochalcone + UDP-alpha-D-glucose = a 3'-(beta-D-glucopyranosyl)-2'-hydroxy-beta-oxodihydrochalcone + UDP + H(+). UDP-glucose-dependent glucosyltransferase catalyzing the C-glucosylation of 2-hydroxyflavanones (2-hydroxynaringenin, 2-hydroxyeriodictyol and 2-hydroxypinocembrin) and phloretin. No activity with flavanones, flavones or flavonols. Exhibits C-glycosylation activity toward 2',4',6'-trihydroxyacetophenone and phloretin using UDP-glucose as sugar donor. Can use UDP-galactose as sugar donor, but catalytic efficiency is 14-fold lower toward UDP-galactose than toward UDP-glucose. This is UDP-glycosyltransferase 708C1 from Fagopyrum esculentum (Common buckwheat).